The following is a 276-amino-acid chain: 4-chlorobenzoyl coenzyme A dehalogenase-2 (276 aa).

66–71 (AGFDLE) contacts substrate. His93 functions as the Proton acceptor in the catalytic mechanism. Gly117 contributes to the substrate binding site. The Nucleophile role is filled by Asp148. Arg261 contacts substrate.

This sequence belongs to the enoyl-CoA hydratase/isomerase family. Homotetramer.

The enzyme catalyses 4-chlorobenzoyl-CoA + H2O = 4-hydroxybenzoyl-CoA + chloride + H(+). It participates in xenobiotic degradation; 4-chlorobenzoate degradation; 4-hydroxybenzoate from 4-chlorobenzoate: step 2/3. In terms of biological role, dehalogenates 4-chlorobenzoyl-CoA, 4-iodobenzoyl-CoA, 4-bromobenzoyl-CoA and, at a slower rate, 4-fluorobenzoyl-CoA. Does not dehalogenate 2-chlorobenzoyl-CoA or 3-chlorobenzoyl-CoA. The protein is 4-chlorobenzoyl coenzyme A dehalogenase-2 of Arthrobacter sp.